A 439-amino-acid polypeptide reads, in one-letter code: Dihydroorotase (439 aa).

Residues histidine 65 and histidine 67 each coordinate Zn(2+). Substrate-binding positions include 67-69 (HFR) and asparagine 99. Residues aspartate 156, histidine 183, histidine 246, and aspartate 321 each coordinate Zn(2+). Aspartate 321 is a catalytic residue. Substrate contacts are provided by residues histidine 325 and 339–340 (FG).

This sequence belongs to the metallo-dependent hydrolases superfamily. DHOase family. Class I DHOase subfamily. Zn(2+) is required as a cofactor.

It carries out the reaction (S)-dihydroorotate + H2O = N-carbamoyl-L-aspartate + H(+). It participates in pyrimidine metabolism; UMP biosynthesis via de novo pathway; (S)-dihydroorotate from bicarbonate: step 3/3. Functionally, catalyzes the reversible cyclization of carbamoyl aspartate to dihydroorotate. The sequence is that of Dihydroorotase from Chlorobaculum tepidum (strain ATCC 49652 / DSM 12025 / NBRC 103806 / TLS) (Chlorobium tepidum).